A 144-amino-acid polypeptide reads, in one-letter code: Eukaryotic translation initiation factor 1A (144 aa).

The segment covering 1 to 15 (MPKNKGKGGKNRRRG) has biased composition (basic residues). Disordered stretches follow at residues 1–26 (MPKNKGKGGKNRRRGKNENESEKREL) and 114–144 (KINETDTFGPGDDDEIQFDDIGDDDEDIDDI). Residues 16-26 (KNENESEKREL) are compositionally biased toward basic and acidic residues. The S1-like domain occupies 22-96 (EKRELVFKED…NKADVILKYN (75 aa)). The span at 124 to 144 (GDDDEIQFDDIGDDDEDIDDI) shows a compositional bias: acidic residues.

Belongs to the eIF-1A family. In terms of assembly, component of the 43S pre-initiation complex (43S PIC), which is composed of the 40S ribosomal subunit, EIF1, eIF1A (EIF1AX), eIF3 complex, EIF5 and eIF2-GTP-initiator tRNA complex (eIF2 ternary complex). Interacts with EIF5; this interaction contributes to the maintenance of EIF1 within the open 43S PIC. Interacts through its C-terminal domain (CTD) with the CTD of EIF5B; from the location of the start codon by the 43S complex until the formation of the 80S complex.

It localises to the cytoplasm. In terms of biological role, component of the 43S pre-initiation complex (43S PIC), which binds to the mRNA cap-proximal region, scans mRNA 5'-untranslated region, and locates the initiation codon. This protein enhances formation of the cap-proximal complex. Together with EIF1, facilitates scanning, start codon recognition, promotion of the assembly of 48S complex at the initiation codon (43S PIC becomes 48S PIC after the start codon is reached), and dissociation of aberrant complexes. After start codon location, together with EIF5B orients the initiator methionine-tRNA in a conformation that allows 60S ribosomal subunit joining to form the 80S initiation complex. Is released after 80S initiation complex formation, just after GTP hydrolysis by EIF5B, and before release of EIF5B. Its globular part is located in the A site of the 40S ribosomal subunit. Its interaction with EIF5 during scanning contribute to the maintenance of EIF1 within the open 43S PIC. In contrast to yeast orthologs, does not bind EIF1. The sequence is that of Eukaryotic translation initiation factor 1A (Eif1a) from Mus musculus (Mouse).